The chain runs to 412 residues: MDELLIQDPEVGRAIVQEVERQTGKLELIASENFVSPAVRAAQGSVLTHKYAEGYPGKRYYGGCEFVDVAENLAIDRACEIFGAQYANVQPHSGSQANMAVYFSALTPGDTILAMDLSHGGHLTHGSPVNFSGRFYNVVFYGVSRETGCIDYDSVAELAREHRPAMIVAGASAYSRIIDFARFRAIADEVGSLLMVDMAHIAGLVAAGLHPSPVGTAHFTTTTTHKTLRGPRGGMILSDEEAAKKLNSQIFPGIQGGPLMHVIAAKAVAFGEALRPEFGAYQKQVVANAAKLAATLTDAGFELVSGGTDNHLMLVDLTNKDITGKDAQHALDLAGITANKNTVPFETRSPFVTSGIRLGTPALTTRGMKEAEMVKVAGWIIDALGNIGNETRLAEISRDVEKFARQFPLFHW.

(6S)-5,6,7,8-tetrahydrofolate-binding positions include Leu-117 and 121–123; that span reads GHL. An N6-(pyridoxal phosphate)lysine modification is found at Lys-226. A (6S)-5,6,7,8-tetrahydrofolate-binding site is contributed by 349 to 351; it reads SPF.

The protein belongs to the SHMT family. As to quaternary structure, homodimer. It depends on pyridoxal 5'-phosphate as a cofactor.

The protein resides in the cytoplasm. It carries out the reaction (6R)-5,10-methylene-5,6,7,8-tetrahydrofolate + glycine + H2O = (6S)-5,6,7,8-tetrahydrofolate + L-serine. It functions in the pathway one-carbon metabolism; tetrahydrofolate interconversion. It participates in amino-acid biosynthesis; glycine biosynthesis; glycine from L-serine: step 1/1. Its function is as follows. Catalyzes the reversible interconversion of serine and glycine with tetrahydrofolate (THF) serving as the one-carbon carrier. This reaction serves as the major source of one-carbon groups required for the biosynthesis of purines, thymidylate, methionine, and other important biomolecules. Also exhibits THF-independent aldolase activity toward beta-hydroxyamino acids, producing glycine and aldehydes, via a retro-aldol mechanism. The protein is Serine hydroxymethyltransferase of Oleidesulfovibrio alaskensis (strain ATCC BAA-1058 / DSM 17464 / G20) (Desulfovibrio alaskensis).